Consider the following 190-residue polypeptide: GTP cyclohydrolase 1 1 (190 aa).

This sequence belongs to the GTP cyclohydrolase I family. Homomer.

The enzyme catalyses GTP + H2O = 7,8-dihydroneopterin 3'-triphosphate + formate + H(+). It participates in cofactor biosynthesis; 7,8-dihydroneopterin triphosphate biosynthesis; 7,8-dihydroneopterin triphosphate from GTP: step 1/1. This Pseudomonas putida (strain ATCC 47054 / DSM 6125 / CFBP 8728 / NCIMB 11950 / KT2440) protein is GTP cyclohydrolase 1 1.